The following is a 449-amino-acid chain: Chromosomal replication initiator protein DnaA (449 aa).

The interval 1–73 (MDADLKNLWD…ANSIKAVCSK (73 aa)) is domain I, interacts with DnaA modulators. Positions 73 to 110 (KLYTIEFIIMSEIYEKEEIKSSSNQKSKAIVVNDEMSS) are domain II. Positions 111-327 (TLNPKYTFNS…GALIRIIAYS (217 aa)) are domain III, AAA+ region. Residues G155, G157, K158, and T159 each coordinate ATP. The domain IV, binds dsDNA stretch occupies residues 328 to 449 (SLTNREVTVD…NDITKKLTQN (122 aa)).

This sequence belongs to the DnaA family. As to quaternary structure, oligomerizes as a right-handed, spiral filament on DNA at oriC.

The protein resides in the cytoplasm. In terms of biological role, plays an essential role in the initiation and regulation of chromosomal replication. ATP-DnaA binds to the origin of replication (oriC) to initiate formation of the DNA replication initiation complex once per cell cycle. Binds the DnaA box (a 9 base pair repeat at the origin) and separates the double-stranded (ds)DNA. Forms a right-handed helical filament on oriC DNA; dsDNA binds to the exterior of the filament while single-stranded (ss)DNA is stabiized in the filament's interior. The ATP-DnaA-oriC complex binds and stabilizes one strand of the AT-rich DNA unwinding element (DUE), permitting loading of DNA polymerase. After initiation quickly degrades to an ADP-DnaA complex that is not apt for DNA replication. Binds acidic phospholipids. This Clostridium beijerinckii (strain ATCC 51743 / NCIMB 8052) (Clostridium acetobutylicum) protein is Chromosomal replication initiator protein DnaA.